The primary structure comprises 584 residues: Alpha-glucosidase MAL32 (584 aa).

Residue D214 is the Nucleophile of the active site. E276 serves as the catalytic Proton donor.

This sequence belongs to the glycosyl hydrolase 13 family.

The enzyme catalyses Hydrolysis of terminal, non-reducing (1-&gt;4)-linked alpha-D-glucose residues with release of alpha-D-glucose.. The sequence is that of Alpha-glucosidase MAL32 (MAL32) from Saccharomyces cerevisiae (strain ATCC 204508 / S288c) (Baker's yeast).